The chain runs to 440 residues: IAA-amino acid hydrolase ILR1-like 4 (440 aa).

Positions 1–23 (MSFFKWVSFVLILHLLNPTLISC) are cleaved as a signal peptide. Residues cysteine 134, histidine 136, glutamate 170, histidine 194, and histidine 397 each contribute to the Mn(2+) site. The short motif at 437-440 (KDEL) is the Prevents secretion from ER element.

Belongs to the peptidase M20 family. Requires Mn(2+) as cofactor. In terms of tissue distribution, expressed in leaves, stems, roots, siliques and flowers. Detected in the vascular tissue of cotyledons and roots, in adult leaves, stems, siliques, petals, hydathodes and in silique abscission zones and funicles.

The protein localises to the endoplasmic reticulum lumen. The enzyme catalyses a jasmonyl-L-amino acid + H2O = a jasmonate + an L-alpha-amino acid. In terms of biological role, hydrolyzes certain amino acid conjugates of the plant growth regulator indole-3-acetic acid (IAA), including IAA-Ala, IAA-Asn, IAA-Cys, IAA-Glu, IAA-Met, IAA-Ser and IAA-Gly. Has a lower efficiency with IAA-Phe, IAA-Leu and IAA-Val and no activity with IAA-Ile. Important for IAA-Leu hydrolysis in roots. Also hydrolyzes amino acid conjugates of jasmonic acid and 12-hydroxy jasmonic acid. This chain is IAA-amino acid hydrolase ILR1-like 4, found in Arabidopsis thaliana (Mouse-ear cress).